Reading from the N-terminus, the 116-residue chain is Ig heavy chain V region 1B43 (116 aa).

Residues 1–18 form the signal peptide; it reads MRVLILLCLFTAFPGILS. Residues 19–48 form a framework-1 region; that stretch reads DVQLQESGPDLVKPSQSLSLTCTVTGYSIT. Cys-40 and Cys-114 are oxidised to a cystine. Residues 49–53 are complementarity-determining-1; sequence SGYSW. The interval 54-67 is framework-2; it reads HWIRQFPGNKLEWM. The interval 68 to 84 is complementarity-determining-2; that stretch reads GYIHYSGNTSYNPSLKS. The segment at 85–116 is framework-3; the sequence is RISITRDTSKNQFFLQLNSVTTEDTATYYCAR.

In Mus musculus (Mouse), this protein is Ig heavy chain V region 1B43.